Reading from the N-terminus, the 270-residue chain is Putative phosphoenolpyruvate synthase regulatory protein (270 aa).

150–157 (GVSRCGKT) lines the ADP pocket.

Belongs to the pyruvate, phosphate/water dikinase regulatory protein family. PSRP subfamily.

It carries out the reaction [pyruvate, water dikinase] + ADP = [pyruvate, water dikinase]-phosphate + AMP + H(+). The catalysed reaction is [pyruvate, water dikinase]-phosphate + phosphate + H(+) = [pyruvate, water dikinase] + diphosphate. In terms of biological role, bifunctional serine/threonine kinase and phosphorylase involved in the regulation of the phosphoenolpyruvate synthase (PEPS) by catalyzing its phosphorylation/dephosphorylation. This is Putative phosphoenolpyruvate synthase regulatory protein from Shewanella pealeana (strain ATCC 700345 / ANG-SQ1).